A 197-amino-acid chain; its full sequence is Imidazoleglycerol-phosphate dehydratase (197 aa).

It belongs to the imidazoleglycerol-phosphate dehydratase family.

The protein resides in the cytoplasm. It carries out the reaction D-erythro-1-(imidazol-4-yl)glycerol 3-phosphate = 3-(imidazol-4-yl)-2-oxopropyl phosphate + H2O. It functions in the pathway amino-acid biosynthesis; L-histidine biosynthesis; L-histidine from 5-phospho-alpha-D-ribose 1-diphosphate: step 6/9. The chain is Imidazoleglycerol-phosphate dehydratase from Pseudomonas entomophila (strain L48).